A 413-amino-acid polypeptide reads, in one-letter code: Tyrosine--tRNA ligase (413 aa).

The 'HIGH' region motif lies at 59–68 (PTAPDIHLGH). The 'KMSKS' region motif lies at 243–247 (KMSKS). Residue lysine 246 participates in ATP binding. In terms of domain architecture, S4 RNA-binding spans 351 to 411 (LAIGQLLKQA…GKRRFARVTL (61 aa)).

Belongs to the class-I aminoacyl-tRNA synthetase family. TyrS type 2 subfamily. In terms of assembly, homodimer.

The protein resides in the cytoplasm. It catalyses the reaction tRNA(Tyr) + L-tyrosine + ATP = L-tyrosyl-tRNA(Tyr) + AMP + diphosphate + H(+). Catalyzes the attachment of tyrosine to tRNA(Tyr) in a two-step reaction: tyrosine is first activated by ATP to form Tyr-AMP and then transferred to the acceptor end of tRNA(Tyr). The protein is Tyrosine--tRNA ligase of Burkholderia pseudomallei (strain K96243).